The primary structure comprises 270 residues: 4-hydroxy-tetrahydrodipicolinate reductase (270 aa).

Residues glycine 9–methionine 14 and glutamate 35 contribute to the NAD(+) site. Arginine 36 contacts NADP(+). NAD(+) is bound by residues glycine 99–threonine 101 and alanine 123–phenylalanine 126. Catalysis depends on histidine 156, which acts as the Proton donor/acceptor. Residue histidine 157 coordinates (S)-2,3,4,5-tetrahydrodipicolinate. Lysine 160 functions as the Proton donor in the catalytic mechanism. Glycine 166–threonine 167 lines the (S)-2,3,4,5-tetrahydrodipicolinate pocket.

This sequence belongs to the DapB family.

It localises to the cytoplasm. The catalysed reaction is (S)-2,3,4,5-tetrahydrodipicolinate + NAD(+) + H2O = (2S,4S)-4-hydroxy-2,3,4,5-tetrahydrodipicolinate + NADH + H(+). It carries out the reaction (S)-2,3,4,5-tetrahydrodipicolinate + NADP(+) + H2O = (2S,4S)-4-hydroxy-2,3,4,5-tetrahydrodipicolinate + NADPH + H(+). Its pathway is amino-acid biosynthesis; L-lysine biosynthesis via DAP pathway; (S)-tetrahydrodipicolinate from L-aspartate: step 4/4. Its function is as follows. Catalyzes the conversion of 4-hydroxy-tetrahydrodipicolinate (HTPA) to tetrahydrodipicolinate. This chain is 4-hydroxy-tetrahydrodipicolinate reductase, found in Haemophilus influenzae (strain ATCC 51907 / DSM 11121 / KW20 / Rd).